The primary structure comprises 449 residues: MLEKVLIANRGEIALRILRACKELGIKTVAVHSTADRELMHLSLADESVCIGPAPATQSYLQIPAIIAAAEVTGATAIHPGYGFLAENADFAEQIERSGFTFVGPTAEVIRLMGDKVSAKDAMKRAGVPTVPGSDGPLPEDEETALAIAREVGYPVIIKAAGGGGGRGMRVVYDESELIKSAKLTRTEAGAAFGNPMVYLEKFLTNPRHVEVQVLSDGQGNAIHLGDRDCSLQRRHQKVIEEAPAPGIDEKARQEVFARCVQACIEIGYRGAGTFEFLYENGRFYFIEMNTRVQVEHPVSEMVTGVDIVKEMLRIASGEKLSIRQEDVVIRGHALECRINAEDPKTFMPSPGKVKHFHAPGGNGVRVDSHLYSGYSVPPNYDSLVGKVITYGADRDEALARMRNALDELIVDGIKTNTELHKDLVRDAAFCKGGVNIHYLEKKLGMDKH.

The Biotin carboxylation domain maps to 1 to 445; the sequence is MLEKVLIANR…NIHYLEKKLG (445 aa). Residues K116, K159, 165-166, 201-204, H209, and H236 each bind ATP; these read GG and EKFL. One can recognise an ATP-grasp domain in the interval 120-317; it reads KDAMKRAGVP…IVKEMLRIAS (198 aa). K238 is a hydrogencarbonate binding site. E276 and E288 together coordinate ATP. The Mg(2+) site is built by E276, E288, and N290. 3 residues coordinate Mn(2+): E276, E288, and N290. 3 residues coordinate hydrogencarbonate: R292, V295, and R338. R292 is a catalytic residue. Position 338 (R338) interacts with biotin.

Acetyl-CoA carboxylase is a heterohexamer of biotin carboxyl carrier protein, biotin carboxylase and the two subunits of carboxyl transferase in a 2:2 complex. It depends on Mg(2+) as a cofactor. Requires Mn(2+) as cofactor.

The enzyme catalyses N(6)-biotinyl-L-lysyl-[protein] + hydrogencarbonate + ATP = N(6)-carboxybiotinyl-L-lysyl-[protein] + ADP + phosphate + H(+). The protein operates within lipid metabolism; malonyl-CoA biosynthesis; malonyl-CoA from acetyl-CoA: step 1/1. Its function is as follows. This protein is a component of the acetyl coenzyme A carboxylase complex; first, biotin carboxylase catalyzes the carboxylation of the carrier protein and then the transcarboxylase transfers the carboxyl group to form malonyl-CoA. This chain is Biotin carboxylase (accC), found in Pseudomonas aeruginosa (strain ATCC 15692 / DSM 22644 / CIP 104116 / JCM 14847 / LMG 12228 / 1C / PRS 101 / PAO1).